Here is a 340-residue protein sequence, read N- to C-terminus: PRKC apoptosis WT1 regulator protein (340 aa).

A compositionally biased stretch (polar residues) spans 1–18 (MATGGYRTSSGLGGSTTD). A disordered region spans residues 1–253 (MATGGYRTSS…TDRSGFPRYN (253 aa)). Residues 47 to 82 (SDAAGKPPAGALGTPAAAAANELNNNLPGGAPAAPA) are compositionally biased toward low complexity. Positions 68-72 (ELNNN) match the B30.2/SPRY domain-binding motif motif. Ser108 bears the Phosphoserine mark. Residues 145 to 161 (RKGKGQIEKRKLREKRR) carry the Nuclear localization signal motif. The segment at 145–203 (RKGKGQIEKRKLREKRRSTGVVNIPAAECLDEYEDDEAGQKERKREDAITQQNTIQNEA) is selective for apoptosis induction in cancer cells (SAC). Phosphothreonine; by PKA is present on Thr163. The span at 182–192 (AGQKERKREDA) shows a compositional bias: basic and acidic residues. Residues 186-206 (ERKREDAITQQNTIQNEAVNL) adopt a coiled-coil conformation. The segment covering 193-203 (ITQQNTIQNEA) has biased composition (polar residues). Phosphoserine is present on Ser231. Residues 242–253 (SRTDRSGFPRYN) are compositionally biased toward basic and acidic residues. A leucine-zipper region spans residues 300–340 (IGKLKEEIDLLNRDLDDIEDENEQLKQENKTLLKVVGQLTR).

In terms of assembly, homooligomer. Interacts (via the C-terminal region) with WT1. Interacts with THAP1. Interacts with AATF. Interacts with BACE1. Interacts with SPSB1 (via B30.2/SPRY domain); this interaction is direct and occurs in association with the Elongin BC complex. Interacts with SPSB2 (via B30.2/SPRY domain); this interaction occurs in association with the Elongin BC complex. Interacts with SPSB4 (via B30.2/SPRY domain); this interaction occurs in association with the Elongin BC complex. Component of a ternary complex composed of SQSTM1 and PRKCZ. Interacts with actin. In terms of processing, preferentially phosphorylated at the Thr-163 by PKC in cancer cells. Widely expressed. Expression is elevated in various neurodegenerative diseases such as amyotrophic lateral sclerosis, Alzheimer, Parkinson and Huntington diseases and stroke. Down-regulated in several cancers.

The protein localises to the cytoplasm. Its subcellular location is the nucleus. Pro-apoptotic protein capable of selectively inducing apoptosis in cancer cells, sensitizing the cells to diverse apoptotic stimuli and causing regression of tumors in animal models. Induces apoptosis in certain cancer cells by activation of the Fas prodeath pathway and coparallel inhibition of NF-kappa-B transcriptional activity. Inhibits the transcriptional activation and augments the transcriptional repression mediated by WT1. Down-regulates the anti-apoptotic protein BCL2 via its interaction with WT1. Also seems to be a transcriptional repressor by itself. May be directly involved in regulating the amyloid precursor protein (APP) cleavage activity of BACE1. This Homo sapiens (Human) protein is PRKC apoptosis WT1 regulator protein (PAWR).